The chain runs to 140 residues: Sex-regulated protein janus-B (140 aa).

Arg-42 lines the substrate pocket. His-69 acts as the Proton acceptor in catalysis. 110 to 112 (SRT) contacts substrate.

It belongs to the janus family. As to expression, germline cells of adult males.

JanA and janB regulate somatic sex differentiation. The chain is Sex-regulated protein janus-B (janB) from Drosophila melanogaster (Fruit fly).